Consider the following 306-residue polypeptide: tRNA pseudouridine synthase B (306 aa).

Residue aspartate 46 is the Nucleophile of the active site.

It belongs to the pseudouridine synthase TruB family. Type 1 subfamily.

It catalyses the reaction uridine(55) in tRNA = pseudouridine(55) in tRNA. Responsible for synthesis of pseudouridine from uracil-55 in the psi GC loop of transfer RNAs. This Gluconacetobacter diazotrophicus (strain ATCC 49037 / DSM 5601 / CCUG 37298 / CIP 103539 / LMG 7603 / PAl5) protein is tRNA pseudouridine synthase B.